We begin with the raw amino-acid sequence, 666 residues long: Translation factor guf1, mitochondrial (666 aa).

The N-terminal 43 residues, 1-43, are a transit peptide targeting the mitochondrion; the sequence is MRGCLQLARWLRAAPKCPAASLLKPPSGLANPARFFTTSTACW. Positions 68-248 constitute a tr-type G domain; the sequence is DRYRNFCIVA…TVVEKIPAPV (181 aa). Residues 77 to 84, 141 to 145, and 195 to 198 each bind GTP; these read AHVDHGKS, DTPGH, and NKVD.

This sequence belongs to the TRAFAC class translation factor GTPase superfamily. Classic translation factor GTPase family. LepA subfamily.

It localises to the mitochondrion inner membrane. The catalysed reaction is GTP + H2O = GDP + phosphate + H(+). Promotes mitochondrial protein synthesis. May act as a fidelity factor of the translation reaction, by catalyzing a one-codon backward translocation of tRNAs on improperly translocated ribosomes. Binds to mitochondrial ribosomes in a GTP-dependent manner. The chain is Translation factor guf1, mitochondrial (guf1) from Aspergillus niger (strain ATCC MYA-4892 / CBS 513.88 / FGSC A1513).